We begin with the raw amino-acid sequence, 205 residues long: Inosine triphosphate pyrophosphatase (205 aa).

Residue 20–25 coordinates ITP; sequence TGNAKK. Glu-48 contacts Mg(2+). Residues Lys-60, 76 to 77, Lys-93, 152 to 155, Lys-175, and 180 to 181 each bind ITP; these read DT, FGWD, and HR.

This sequence belongs to the HAM1 NTPase family. Homodimer. Mg(2+) serves as cofactor. Mn(2+) is required as a cofactor.

Its subcellular location is the cytoplasm. It catalyses the reaction ITP + H2O = IMP + diphosphate + H(+). The catalysed reaction is dITP + H2O = dIMP + diphosphate + H(+). It carries out the reaction XTP + H2O = XMP + diphosphate + H(+). Pyrophosphatase that hydrolyzes non-canonical purine nucleotides such as inosine triphosphate (ITP), deoxyinosine triphosphate (dITP) or xanthosine 5'-triphosphate (XTP) to their respective monophosphate derivatives. The enzyme does not distinguish between the deoxy- and ribose forms. Probably excludes non-canonical purines from RNA and DNA precursor pools, thus preventing their incorporation into RNA and DNA and avoiding chromosomal lesions. This chain is Inosine triphosphate pyrophosphatase, found in Oryza sativa subsp. japonica (Rice).